The sequence spans 71 residues: Small ribosomal subunit protein bS21 (71 aa).

Belongs to the bacterial ribosomal protein bS21 family.

This chain is Small ribosomal subunit protein bS21, found in Cellvibrio japonicus (strain Ueda107) (Pseudomonas fluorescens subsp. cellulosa).